Consider the following 356-residue polypeptide: Heparan sulfate 2-O-sulfotransferase 1 (356 aa).

Residues 1-11 (MGLLRIMMPPK) are Cytoplasmic-facing. Residues 12–28 (LQLLAVLTFGVLMLFLE) form a helical; Signal-anchor for type II membrane protein membrane-spanning segment. The stretch at 24-51 (MLFLENQIQNLEESREKLERAIARHEVR) forms a coiled coil. Topologically, residues 29-356 (NQIQNLEESR…FYEKIYPKSN (328 aa)) are lumenal. Adenosine 3',5'-bisphosphate contacts are provided by Lys83, Thr84, Ala85, Ser86, Thr87, and Ser88. N-linked (GlcNAc...) asparagine glycans are attached at residues Asn108 and Asn127. Residues His140 and His142 contribute to the active site. Adenosine 3',5'-bisphosphate is bound by residues Arg164 and Ser172. 2 disulfide bridges follow: Cys201–Cys209 and Cys222–Cys228. 4 residues coordinate adenosine 3',5'-bisphosphate: Tyr279, Ser285, Thr290, and Lys293.

It belongs to the sulfotransferase 3 family. Homotrimer.

The protein resides in the golgi apparatus membrane. Catalyzes the transfer of a sulfo group from 3'-phospho-5'-adenylyl sulfate (PAPS) to the 2-OH position of iduronic acid (IdoA) or glucuronic acid (GlcA) within the heparan sulfate (HS) chain and participates in HS biosynthesis. In Xenopus laevis (African clawed frog), this protein is Heparan sulfate 2-O-sulfotransferase 1.